Reading from the N-terminus, the 643-residue chain is 1-deoxy-D-xylulose-5-phosphate synthase (643 aa).

Residues H71 and S112–A114 each bind thiamine diphosphate. D144 serves as a coordination point for Mg(2+). Residues G145–A146, N173, Y284, and E365 contribute to the thiamine diphosphate site. N173 serves as a coordination point for Mg(2+).

This sequence belongs to the transketolase family. DXPS subfamily. Homodimer. Mg(2+) is required as a cofactor. Requires thiamine diphosphate as cofactor.

It catalyses the reaction D-glyceraldehyde 3-phosphate + pyruvate + H(+) = 1-deoxy-D-xylulose 5-phosphate + CO2. It functions in the pathway metabolic intermediate biosynthesis; 1-deoxy-D-xylulose 5-phosphate biosynthesis; 1-deoxy-D-xylulose 5-phosphate from D-glyceraldehyde 3-phosphate and pyruvate: step 1/1. In terms of biological role, catalyzes the acyloin condensation reaction between C atoms 2 and 3 of pyruvate and glyceraldehyde 3-phosphate to yield 1-deoxy-D-xylulose-5-phosphate (DXP). In Mycobacterium leprae (strain Br4923), this protein is 1-deoxy-D-xylulose-5-phosphate synthase.